Consider the following 107-residue polypeptide: Replication initiation control protein YabA (107 aa).

4 residues coordinate Zn(2+): His81, Cys83, Cys97, and Cys100.

Belongs to the YabA family. Homotetramer. Interacts with both DnaA and DnaN, acting as a bridge between these two proteins. It depends on Zn(2+) as a cofactor.

The protein localises to the cytoplasm. It is found in the nucleoid. Involved in control of chromosome replication initiation. Inhibits the cooperative binding of DnaA to the oriC region, thus negatively regulating initiation of chromosome replication. Inhibits the ability of DnaA-ATP to form a helix on DNA; does not disassemble preformed DnaA-DNA helices. Decreases the residence time of DnaA on the chromosome at its binding sites (oriC, replication forks and promoter-binding sites). Tethers DnaA to the replication machinery via the DNA polymerase beta sliding clamp subunit (dnaN). Associates with oriC and other DnaA targets on the chromosome in a DnaA-dependent manner. In Streptococcus equi subsp. equi (strain 4047), this protein is Replication initiation control protein YabA.